A 98-amino-acid chain; its full sequence is UPF0251 protein Sputw3181_3483 (98 aa).

The protein belongs to the UPF0251 family.

This is UPF0251 protein Sputw3181_3483 from Shewanella sp. (strain W3-18-1).